A 307-amino-acid chain; its full sequence is Barttin (307 aa).

At M1 to K5 the chain is on the cytoplasmic side. A regulates channel membrane trafficking and anion conductance region spans residues M1–I72. Residues T6 to M26 traverse the membrane as a helical segment. The Extracellular portion of the chain corresponds to S27–Q32. A helical transmembrane segment spans residues V33–M53. S-palmitoyl cysteine attachment occurs at residues C54 and C56. Residues C54–G307 lie on the Cytoplasmic side of the membrane. S79 and S107 each carry phosphoserine. 2 disordered regions span residues T135–A154 and G161–L224. Residues G161–H171 are compositionally biased toward basic and acidic residues. Phosphoserine is present on S162. Low complexity predominate over residues S172–S183. Positions S198 to P207 are enriched in polar residues. 2 positions are modified to phosphoserine: S228 and S289. The segment at R255–G307 is disordered.

In terms of assembly, interacts with CLCNK channels. Forms probably heteromers with CLCNKA in the thin ascending limb of Henle and with CLCNKB in the thick ascending limb and more distal segments. Palmitoylation is necessary for activation of plasma membrane-inserted CLC-K/barttin channels. In terms of tissue distribution, expression is evident in inner and outer stripes of the outer medulla of the kidney, most probably representing thin limbs of Henle's loop together with some collecting duct coursing through the outer stripe. In situ hybridization in fetal kidney at 18.5 dpc revealed a clear continuity between hybridization signals from the thin limb of Henle's loop and the distal convoluted tubule, suggesting that part of the expression pattern may result from expression in the thick ascending limb of Henle's loop. In addition, strong signals are present in a subset of cortical tubules, representing distal convoluted tubules or cortical collecting duct. Strong expression is also observed in the inner medulla of the kidney. This expression does not extend all the way to the tip of the papilla. Thus this signal most probably represents cells of the thin ascending limbs. In the inner ear, strong and exclusive expression is detected in marginal cells of the stria vascularis. In addition to cochlear signal, expression is observed in dark cells localized at the base of the crista ampullaris of the vestibular organ.

It is found in the basolateral cell membrane. In terms of biological role, regulatory subunit of anion-selective CLCNKA:BSND and CLCNKB:BSND heteromeric channels involved in basolateral chloride conductance along the nephron to achieve urine concentration and maintain systemic acid-base homeostasis, and in the stria vascularis of the inner ear to establish the endocochlear potential necessary for normal hearing. Most likely acts as a chaperone that allosterically regulates proper sorting of CLCNKA:BSND and CLCNKB:BSND channels at the basolateral plasma membrane domain and functional switch to ion conducting state. Mediates constitutive opening of channel common gates. The polypeptide is Barttin (Mus musculus (Mouse)).